A 415-amino-acid chain; its full sequence is Acetyl-CoA acetyltransferase 1 (415 aa).

Cys99 functions as the Acyl-thioester intermediate in the catalytic mechanism. Residue Lys239 participates in CoA binding. Ala256 is a binding site for K(+). Ser260 serves as a coordination point for CoA. Val357 lines the K(+) pocket. Active-site proton acceptor residues include His361 and Cys391.

It belongs to the thiolase-like superfamily. Thiolase family. In terms of tissue distribution, expressed in the vascular system of roots, cotyledons, young leaves, fully expanded leaves, stems, flowers, and funiculi of siliques.

It is found in the cytoplasm. It localises to the peroxisome. It carries out the reaction 2 acetyl-CoA = acetoacetyl-CoA + CoA. The protein operates within metabolic intermediate biosynthesis; (R)-mevalonate biosynthesis; (R)-mevalonate from acetyl-CoA: step 1/3. Catalyzes the condensation of two molecules of acetyl-CoA to produce acetoacetyl-CoA. The polypeptide is Acetyl-CoA acetyltransferase 1 (Arabidopsis thaliana (Mouse-ear cress)).